Here is a 181-residue protein sequence, read N- to C-terminus: Large ribosomal subunit protein uL5 (181 aa).

This sequence belongs to the universal ribosomal protein uL5 family. In terms of assembly, part of the 50S ribosomal subunit; part of the 5S rRNA/L5/L18/L25 subcomplex. Contacts the 5S rRNA and the P site tRNA. Forms a bridge to the 30S subunit in the 70S ribosome.

Functionally, this is one of the proteins that bind and probably mediate the attachment of the 5S RNA into the large ribosomal subunit, where it forms part of the central protuberance. In the 70S ribosome it contacts protein S13 of the 30S subunit (bridge B1b), connecting the 2 subunits; this bridge is implicated in subunit movement. Contacts the P site tRNA; the 5S rRNA and some of its associated proteins might help stabilize positioning of ribosome-bound tRNAs. The polypeptide is Large ribosomal subunit protein uL5 (Sulfurovum sp. (strain NBC37-1)).